We begin with the raw amino-acid sequence, 424 residues long: Probable serine/threonine-protein kinase PBL15 (424 aa).

The 282-residue stretch at 99–380 folds into the Protein kinase domain; the sequence is FSGNYLLGEG…AVVEALESLI (282 aa). ATP contacts are provided by residues 105-113 and Lys134; that span reads LGEGGFGKV. Tyr179 carries the post-translational modification Phosphotyrosine. Residue Asp229 is the Proton acceptor of the active site. Phosphoserine is present on Ser233. Residues Thr264 and Thr269 each carry the phosphothreonine modification. Tyr277 is subject to Phosphotyrosine. A disordered region spans residues 390–424; that stretch reads GHWPLSPKSQGGKVSPKVRGDHRSGRKSAPGSLRS.

Belongs to the protein kinase superfamily. Ser/Thr protein kinase family. As to quaternary structure, interacts with the Xanthomonas campestris effector XopAC/AvrAC.

The protein localises to the cell membrane. The catalysed reaction is L-seryl-[protein] + ATP = O-phospho-L-seryl-[protein] + ADP + H(+). It catalyses the reaction L-threonyl-[protein] + ATP = O-phospho-L-threonyl-[protein] + ADP + H(+). In terms of biological role, may be involved in plant defense signaling. The chain is Probable serine/threonine-protein kinase PBL15 from Arabidopsis thaliana (Mouse-ear cress).